An 859-amino-acid chain; its full sequence is DNA mismatch repair protein MutS (859 aa).

617–624 (GPNMGGKS) contacts ATP.

The protein belongs to the DNA mismatch repair MutS family.

Its function is as follows. This protein is involved in the repair of mismatches in DNA. It is possible that it carries out the mismatch recognition step. This protein has a weak ATPase activity. In Stutzerimonas stutzeri (strain A1501) (Pseudomonas stutzeri), this protein is DNA mismatch repair protein MutS.